Here is a 380-residue protein sequence, read N- to C-terminus: Cytochrome b (380 aa).

4 consecutive transmembrane segments (helical) span residues 33–53 (FGSL…FLAM), 77–98 (WLIR…YLHV), 113–133 (WNIG…GYVL), and 178–198 (FFAF…IHLL). His83 and His97 together coordinate heme b. Heme b is bound by residues His182 and His196. His201 contributes to the a ubiquinone binding site. The next 4 membrane-spanning stretches (helical) occupy residues 226 to 246 (YKDL…ALFS), 288 to 308 (LGGV…PMLH), 320 to 340 (LSQI…WIGG), and 347 to 367 (FVLI…IALP).

This sequence belongs to the cytochrome b family. In terms of assembly, the cytochrome bc1 complex contains 3 respiratory subunits (MT-CYB, CYC1 and UQCRFS1), 2 core proteins (UQCRC1 and UQCRC2) and probably 6 low-molecular weight proteins. Heme b is required as a cofactor.

The protein resides in the mitochondrion inner membrane. Functionally, component of the ubiquinol-cytochrome c reductase complex (complex III or cytochrome b-c1 complex) that is part of the mitochondrial respiratory chain. The b-c1 complex mediates electron transfer from ubiquinol to cytochrome c. Contributes to the generation of a proton gradient across the mitochondrial membrane that is then used for ATP synthesis. This Acipenser transmontanus (White sturgeon) protein is Cytochrome b (mt-cyb).